Consider the following 288-residue polypeptide: Proteasome assembly chaperone 1 (288 aa).

The disordered stretch occupies residues 1 to 33 (MATFFGEVQSVFSRAVDEEEEDEDDDEEEEEDR). Residues 17 to 33 (DEEEEDEDDDEEEEEDR) are compositionally biased toward acidic residues.

This sequence belongs to the PSMG1 family. Forms a heterodimer with psmg2. Post-translationally, degraded by the proteasome upon completion of 20S proteasome maturation.

The protein resides in the cytoplasm. The protein localises to the endoplasmic reticulum. Its function is as follows. Chaperone protein which promotes assembly of the 20S proteasome as part of a heterodimer with psmg2. The sequence is that of Proteasome assembly chaperone 1 from Xenopus laevis (African clawed frog).